Reading from the N-terminus, the 823-residue chain is Lon protease (823 aa).

The 196-residue stretch at 22–217 folds into the Lon N-terminal domain; the sequence is LPLLPVRDVV…KVNEHLNKEH (196 aa). 369–376 is an ATP binding site; sequence GPPGVGKT. A Lon proteolytic domain is found at 605–786; the sequence is KNEVGIVTGL…DDVLAVALET (182 aa). Residues Ser-692 and Lys-735 contribute to the active site. The interval 788–823 is disordered; sequence PPPPPASEGKPAATVKAPPRRGIAAPRKGAMAGAKS.

The protein belongs to the peptidase S16 family. As to quaternary structure, homohexamer. Organized in a ring with a central cavity.

The protein resides in the cytoplasm. The catalysed reaction is Hydrolysis of proteins in presence of ATP.. Its function is as follows. ATP-dependent serine protease that mediates the selective degradation of mutant and abnormal proteins as well as certain short-lived regulatory proteins. Required for cellular homeostasis and for survival from DNA damage and developmental changes induced by stress. Degrades polypeptides processively to yield small peptide fragments that are 5 to 10 amino acids long. Binds to DNA in a double-stranded, site-specific manner. The protein is Lon protease of Geobacter metallireducens (strain ATCC 53774 / DSM 7210 / GS-15).